The sequence spans 255 residues: Tryptophan synthase alpha chain (255 aa).

Active-site proton acceptor residues include E42 and D53.

The protein belongs to the TrpA family. In terms of assembly, tetramer of two alpha and two beta chains.

The enzyme catalyses (1S,2R)-1-C-(indol-3-yl)glycerol 3-phosphate + L-serine = D-glyceraldehyde 3-phosphate + L-tryptophan + H2O. Its pathway is amino-acid biosynthesis; L-tryptophan biosynthesis; L-tryptophan from chorismate: step 5/5. Functionally, the alpha subunit is responsible for the aldol cleavage of indoleglycerol phosphate to indole and glyceraldehyde 3-phosphate. This chain is Tryptophan synthase alpha chain, found in Wolinella succinogenes (strain ATCC 29543 / DSM 1740 / CCUG 13145 / JCM 31913 / LMG 7466 / NCTC 11488 / FDC 602W) (Vibrio succinogenes).